Reading from the N-terminus, the 447-residue chain is uncharacterized protein (447 aa).

12 helical membrane passes run 17–37 (IMMM…SSSA), 40–60 (VAGP…LFIM), 95–115 (IYWK…AIFI), 118–138 (WLPG…VTIV), 154–174 (AMIK…LLFV), 200–220 (GLIT…IIGV), 243–263 (IVAF…WNQV), 289–311 (AVIL…RILY), 333–353 (MFAI…SLFA), 361–381 (LMGS…FAHL), 393–415 (YYVK…ILIG), and 419–441 (TTSI…AYLV).

It belongs to the amino acid-polyamine-organocation (APC) superfamily.

It is found in the cell membrane. In terms of biological role, may participate in leucine metabolism. May transport leucine or a compound related to leucine metabolism. This is an uncharacterized protein from Bacillus subtilis (strain 168).